The following is a 174-amino-acid chain: MLTLTQGKKIVNALRSRLAFEYNGQLIKILSKNIMAVGSLRREEKMLNDVDLLIIVPEKKLLKYVLPNIRIKGLSFSVKVCGERKCVLFIEWEKKTYQLDLFTALAEEKPYAIFHFTGPVSYLIRIRAALKKKNYKLNQYGLFKNQTLVPLKITTERELIKELGFTYRVPKKRL.

The segment at 42 to 51 is involved in ssDNA binding; it reads REEKMLNDVD. D49 and D51 together coordinate Mg(2+). C81 and C86 form a disulfide bridge. Residue D100 coordinates Mg(2+).

The protein belongs to the DNA polymerase type-X family. Mg(2+) is required as a cofactor.

Its subcellular location is the virion. It carries out the reaction DNA(n) + a 2'-deoxyribonucleoside 5'-triphosphate = DNA(n+1) + diphosphate. In terms of biological role, error-prone polymerase lacking a proofreading 3'-5' exonuclease which catalyzes the gap-filling reaction during the DNA repair process. Specifically binds intermediates in the single-nucleotide base-excision repair process. Also catalyzes DNA polymerization with low nucleotide-insertion fidelity. Probably acts as a strategic DNA mutase, which gives rise to a rapid emergence of variants. Generates mismatched G-G pairs, in that case, the polymerase first binds the deoxynucleotide followed by mismatch formation. Together with the viral DNA ligase, fills the single nucleotide gaps generated by the AP endonuclease. Binds DNA with high affinity via the helix alphaE. The polypeptide is Repair DNA polymerase X (Ornithodoros (relapsing fever ticks)).